A 147-amino-acid chain; its full sequence is Large ribosomal subunit protein bL9 (147 aa).

The interval 44–63 (VKTLDAQKRSEDKRKEQEKL) is disordered. Over residues 48–63 (DAQKRSEDKRKEQEKL) the composition is skewed to basic and acidic residues.

Belongs to the bacterial ribosomal protein bL9 family.

Functionally, binds to the 23S rRNA. This chain is Large ribosomal subunit protein bL9, found in Brevibacillus brevis (strain 47 / JCM 6285 / NBRC 100599).